We begin with the raw amino-acid sequence, 753 residues long: 5-methyltetrahydropteroyltriglutamate--homocysteine methyltransferase (753 aa).

Residues 17 to 20 and lysine 117 contribute to the 5-methyltetrahydropteroyltri-L-glutamate site; that span reads RELK. L-homocysteine contacts are provided by residues 431–433 and glutamate 484; that span reads IGS. Residues 431–433 and glutamate 484 each bind L-methionine; that span reads IGS. 5-methyltetrahydropteroyltri-L-glutamate-binding positions include 515-516 and tryptophan 561; that span reads RC. Position 599 (aspartate 599) interacts with L-homocysteine. Aspartate 599 lines the L-methionine pocket. A 5-methyltetrahydropteroyltri-L-glutamate-binding site is contributed by glutamate 605. Residues histidine 641, cysteine 643, and glutamate 665 each coordinate Zn(2+). Histidine 694 acts as the Proton donor in catalysis. Position 726 (cysteine 726) interacts with Zn(2+).

The protein belongs to the vitamin-B12 independent methionine synthase family. Zn(2+) is required as a cofactor.

The enzyme catalyses 5-methyltetrahydropteroyltri-L-glutamate + L-homocysteine = tetrahydropteroyltri-L-glutamate + L-methionine. Its pathway is amino-acid biosynthesis; L-methionine biosynthesis via de novo pathway; L-methionine from L-homocysteine (MetE route): step 1/1. Its function is as follows. Catalyzes the transfer of a methyl group from 5-methyltetrahydrofolate to homocysteine resulting in methionine formation. This chain is 5-methyltetrahydropteroyltriglutamate--homocysteine methyltransferase, found in Escherichia fergusonii (strain ATCC 35469 / DSM 13698 / CCUG 18766 / IAM 14443 / JCM 21226 / LMG 7866 / NBRC 102419 / NCTC 12128 / CDC 0568-73).